Here is a 220-residue protein sequence, read N- to C-terminus: Cysteine-rich venom protein (220 aa).

An SCP domain is found at 20–147; that stretch reads DLHNSLRRSV…AYKYFYVCQY (128 aa). 8 cysteine pairs are disulfide-bonded: Cys56-Cys134, Cys73-Cys148, Cys129-Cys145, Cys167-Cys174, Cys170-Cys179, Cys183-Cys215, Cys192-Cys209, and Cys200-Cys213. Residues 183 to 215 enclose the ShKT domain; it reads CTREDEFINCNDLVKQGCQTDYLKSNCAASCFC.

In terms of tissue distribution, expressed by the venom gland.

The protein localises to the secreted. In terms of biological role, blocks contraction of smooth muscle elicited by high potassium-induced depolarization, but does not block caffeine-stimulated contraction. May target voltage-gated calcium channels in smooth muscle. In Echis coloratus (Carpet viper), this protein is Cysteine-rich venom protein.